The following is a 227-amino-acid chain: 2-C-methyl-D-erythritol 4-phosphate cytidylyltransferase (227 aa).

The protein belongs to the IspD/TarI cytidylyltransferase family. IspD subfamily.

The catalysed reaction is 2-C-methyl-D-erythritol 4-phosphate + CTP + H(+) = 4-CDP-2-C-methyl-D-erythritol + diphosphate. The protein operates within isoprenoid biosynthesis; isopentenyl diphosphate biosynthesis via DXP pathway; isopentenyl diphosphate from 1-deoxy-D-xylulose 5-phosphate: step 2/6. Catalyzes the formation of 4-diphosphocytidyl-2-C-methyl-D-erythritol from CTP and 2-C-methyl-D-erythritol 4-phosphate (MEP). This chain is 2-C-methyl-D-erythritol 4-phosphate cytidylyltransferase, found in Deinococcus geothermalis (strain DSM 11300 / CIP 105573 / AG-3a).